A 267-amino-acid chain; its full sequence is Extensin (267 aa).

The disordered stretch occupies residues 1 to 267; sequence MCPAFSIFFN…HTPSPPPPYY (267 aa). 13 repeats span residues 18-33, 34-54, 55-70, 71-91, 92-107, 108-128, 129-144, 145-160, 161-179, 180-195, 196-211, 212-232, and 233-253; these read PPTY…PKPT and PPTY…YTPT. The tract at residues 18–253 is highly repetitive; sequence PPTYTPSPKP…ATKPPTYTPT (236 aa). Residues 20–267 show a composition bias toward pro residues; that stretch reads TYTPSPKPPT…HTPSPPPPYY (248 aa). The tract at residues 261 to 265 is extensin repetitive element; the sequence is SPPPP.

Hydroxylated on proline residues in the S-P-P-P-P repeat. In terms of processing, O-glycosylated on hydroxyprolines. Mainly in the coleoptile node and root tip.

It localises to the secreted. Its subcellular location is the primary cell wall. Structural component in primary cell wall. The polypeptide is Extensin (HRGP) (Zea mays (Maize)).